Reading from the N-terminus, the 355-residue chain is Elongation factor Ts (355 aa).

The interval 82 to 85 is involved in Mg(2+) ion dislocation from EF-Tu; the sequence is TDFV.

Belongs to the EF-Ts family.

The protein resides in the cytoplasm. Functionally, associates with the EF-Tu.GDP complex and induces the exchange of GDP to GTP. It remains bound to the aminoacyl-tRNA.EF-Tu.GTP complex up to the GTP hydrolysis stage on the ribosome. The chain is Elongation factor Ts from Helicobacter pylori (strain Shi470).